The chain runs to 319 residues: Putative peptide biosynthesis protein YydG (319 aa).

The Radical SAM core domain maps to 1 to 214; it reads MYNKTVSINL…HCPGYDIVYH (214 aa). 3 residues coordinate [4Fe-4S] cluster: Cys-14, Cys-18, and Cys-21.

[4Fe-4S] cluster is required as a cofactor.

In terms of biological role, required for production of the modified peptide YydF. May activate a metalloenzyme (Potential). In Bacillus subtilis (strain 168), this protein is Putative peptide biosynthesis protein YydG (yydG).